Here is a 140-residue protein sequence, read N- to C-terminus: Large ribosomal subunit protein uL16 (140 aa).

Basic residues predominate over residues 1–14 (MLMPKKVKHRKQMK). The segment at 1 to 20 (MLMPKKVKHRKQMKGRMSGT) is disordered.

This sequence belongs to the universal ribosomal protein uL16 family. As to quaternary structure, part of the 50S ribosomal subunit.

Binds 23S rRNA and is also seen to make contacts with the A and possibly P site tRNAs. The chain is Large ribosomal subunit protein uL16 from Geotalea daltonii (strain DSM 22248 / JCM 15807 / FRC-32) (Geobacter daltonii).